The following is a 178-amino-acid chain: ATP synthase subunit delta (178 aa).

It belongs to the ATPase delta chain family. As to quaternary structure, F-type ATPases have 2 components, F(1) - the catalytic core - and F(0) - the membrane proton channel. F(1) has five subunits: alpha(3), beta(3), gamma(1), delta(1), epsilon(1). F(0) has three main subunits: a(1), b(2) and c(10-14). The alpha and beta chains form an alternating ring which encloses part of the gamma chain. F(1) is attached to F(0) by a central stalk formed by the gamma and epsilon chains, while a peripheral stalk is formed by the delta and b chains.

It is found in the cell inner membrane. In terms of biological role, f(1)F(0) ATP synthase produces ATP from ADP in the presence of a proton or sodium gradient. F-type ATPases consist of two structural domains, F(1) containing the extramembraneous catalytic core and F(0) containing the membrane proton channel, linked together by a central stalk and a peripheral stalk. During catalysis, ATP synthesis in the catalytic domain of F(1) is coupled via a rotary mechanism of the central stalk subunits to proton translocation. This protein is part of the stalk that links CF(0) to CF(1). It either transmits conformational changes from CF(0) to CF(1) or is implicated in proton conduction. This chain is ATP synthase subunit delta, found in Stutzerimonas stutzeri (strain A1501) (Pseudomonas stutzeri).